A 503-amino-acid polypeptide reads, in one-letter code: uncharacterized protein (503 aa).

ABC transporter domains follow at residues 8–249 and 261–499; these read VPVA…LGRD and IVDQ…MSAI. Residue 43–50 coordinates ATP; it reads GKNGAGKS.

This sequence belongs to the ABC transporter superfamily.

Its function is as follows. Probably part of a binding-protein-dependent transport system YphDEF. Probably responsible for energy coupling to the transport system. This is an uncharacterized protein from Escherichia coli (strain K12).